Here is an 869-residue protein sequence, read N- to C-terminus: Protein translocase subunit SecA (869 aa).

ATP is bound by residues glutamine 88, 106 to 110 (GEGKT), and aspartate 509. Residues 818–840 (QDEGLKFNQREGEDAPAVREKKI) are compositionally biased toward basic and acidic residues. The tract at residues 818–869 (QDEGLKFNQREGEDAPAVREKKIPRNSPCPCGSGKKYKDCCGKSGPKKGILA) is disordered. Zn(2+) is bound by residues cysteine 846, cysteine 848, cysteine 857, and cysteine 858.

Belongs to the SecA family. As to quaternary structure, monomer and homodimer. Part of the essential Sec protein translocation apparatus which comprises SecA, SecYEG and auxiliary proteins SecDF-YajC and YidC. Zn(2+) is required as a cofactor.

The protein resides in the cell inner membrane. Its subcellular location is the cytoplasm. The enzyme catalyses ATP + H2O + cellular proteinSide 1 = ADP + phosphate + cellular proteinSide 2.. Functionally, part of the Sec protein translocase complex. Interacts with the SecYEG preprotein conducting channel. Has a central role in coupling the hydrolysis of ATP to the transfer of proteins into and across the cell membrane, serving as an ATP-driven molecular motor driving the stepwise translocation of polypeptide chains across the membrane. This chain is Protein translocase subunit SecA, found in Campylobacter curvus (strain 525.92).